The primary structure comprises 148 residues: Deoxyuridine 5'-triphosphate nucleotidohydrolase (148 aa).

Substrate-binding positions include 68–70, Asn81, 85–87, and Lys95; these read RSG and TID.

This sequence belongs to the dUTPase family. It depends on Mg(2+) as a cofactor.

It catalyses the reaction dUTP + H2O = dUMP + diphosphate + H(+). It participates in pyrimidine metabolism; dUMP biosynthesis; dUMP from dCTP (dUTP route): step 2/2. In terms of biological role, this enzyme is involved in nucleotide metabolism: it produces dUMP, the immediate precursor of thymidine nucleotides and it decreases the intracellular concentration of dUTP so that uracil cannot be incorporated into DNA. The polypeptide is Deoxyuridine 5'-triphosphate nucleotidohydrolase (Rickettsia rickettsii (strain Iowa)).